The primary structure comprises 226 residues: Apoptosis regulator OPG045 (226 aa).

The protein belongs to the orthopoxvirus OPG045 family. In terms of assembly, homodimer. Interacts with host pro-apoptotic protein BCL2L11 (via BH3 domain). Interacts with host NLRP1. Interacts with host BAK.

The protein localises to the host mitochondrion outer membrane. It localises to the host cytoplasm. Plays a role in evading host innate immune response by inhibiting host inflammasome activation. Interacts with and inhibits NLR-mediated interleukin-1 beta/IL1B production in infected cells. At the host mitochondria outer membrane, interacts with the BH3 domain of host BAK and prevents BAK from binding active BAX. In turn, host apoptosis is inhibited. The chain is Apoptosis regulator OPG045 (OPG045) from Vaccinia virus (strain Copenhagen) (VACV).